A 393-amino-acid polypeptide reads, in one-letter code: NAD(P)H-quinone oxidoreductase subunit H, chloroplastic (393 aa).

It belongs to the complex I 49 kDa subunit family. In terms of assembly, NDH is composed of at least 16 different subunits, 5 of which are encoded in the nucleus.

Its subcellular location is the plastid. It is found in the chloroplast thylakoid membrane. The enzyme catalyses a plastoquinone + NADH + (n+1) H(+)(in) = a plastoquinol + NAD(+) + n H(+)(out). It catalyses the reaction a plastoquinone + NADPH + (n+1) H(+)(in) = a plastoquinol + NADP(+) + n H(+)(out). Its function is as follows. NDH shuttles electrons from NAD(P)H:plastoquinone, via FMN and iron-sulfur (Fe-S) centers, to quinones in the photosynthetic chain and possibly in a chloroplast respiratory chain. The immediate electron acceptor for the enzyme in this species is believed to be plastoquinone. Couples the redox reaction to proton translocation, and thus conserves the redox energy in a proton gradient. This is NAD(P)H-quinone oxidoreductase subunit H, chloroplastic from Solanum lycopersicum (Tomato).